We begin with the raw amino-acid sequence, 438 residues long: chitinase-like effector (438 aa).

The first 23 residues, 1–23 (MFTPLSSVTALLALSSAFLGAQA), serve as a signal peptide directing secretion. The region spanning 54 to 437 (FIAKGYYTGW…DAIRSGAGLS (384 aa)) is the GH18 domain. Trp-416 provides a ligand contact to chitin.

Belongs to the glycosyl hydrolase 18 family.

The protein resides in the secreted. In terms of biological role, catalytically impaired chitinase that binds efficiently to chitin, but not to chitosan, xylan, or cellulose. Despite the lack of chitinolytic activity, retains substrate binding specificity and acts as an effector to prevent chitin-triggered immunity by sequestering immunogenic chitin fragments. Does not function in the protection of fungal cell wall against plant hydrolytic enzymes. The sequence is that of chitinase-like effector from Moniliophthora perniciosa (Witches'-broom disease fungus).